Reading from the N-terminus, the 58-residue chain is Putative transcript Y 13 protein (58 aa).

The chain crosses the membrane as a helical span at residues 17–37 (LLGWDLNLSLFLGLCLMLLLA).

The protein localises to the membrane. This is Putative transcript Y 13 protein (TTTY13) from Homo sapiens (Human).